Consider the following 34-residue polypeptide: Stromal 70 kDa heat shock-related protein, chloroplastic (34 aa).

This sequence belongs to the heat shock protein 70 family.

The protein resides in the plastid. Its subcellular location is the chloroplast stroma. In terms of biological role, interacts with newly imported chloroplast proteins to assist in their maturation. The protein is Stromal 70 kDa heat shock-related protein, chloroplastic of Cucurbita maxima (Pumpkin).